Consider the following 241-residue polypeptide: Lipoprotein-releasing system ATP-binding protein LolD 2 (241 aa).

Residues 6–241 (LDAQQLSKSY…YKSYEKSTAV (236 aa)) form the ABC transporter domain. 43 to 50 (GASGSGKT) is a binding site for ATP.

The protein belongs to the ABC transporter superfamily. Lipoprotein translocase (TC 3.A.1.125) family. In terms of assembly, the complex is composed of two ATP-binding proteins (LolD) and two transmembrane proteins (LolC and LolE).

The protein resides in the cell inner membrane. Its function is as follows. Part of the ABC transporter complex LolCDE involved in the translocation of mature outer membrane-directed lipoproteins, from the inner membrane to the periplasmic chaperone, LolA. Responsible for the formation of the LolA-lipoprotein complex in an ATP-dependent manner. The chain is Lipoprotein-releasing system ATP-binding protein LolD 2 from Chlorobium chlorochromatii (strain CaD3).